Consider the following 173-residue polypeptide: NAD(P)H-quinone oxidoreductase subunit J (173 aa).

Belongs to the complex I 30 kDa subunit family. As to quaternary structure, NDH-1 can be composed of about 15 different subunits; different subcomplexes with different compositions have been identified which probably have different functions.

The protein localises to the cellular thylakoid membrane. It catalyses the reaction a plastoquinone + NADH + (n+1) H(+)(in) = a plastoquinol + NAD(+) + n H(+)(out). The enzyme catalyses a plastoquinone + NADPH + (n+1) H(+)(in) = a plastoquinol + NADP(+) + n H(+)(out). In terms of biological role, NDH-1 shuttles electrons from an unknown electron donor, via FMN and iron-sulfur (Fe-S) centers, to quinones in the respiratory and/or the photosynthetic chain. The immediate electron acceptor for the enzyme in this species is believed to be plastoquinone. Couples the redox reaction to proton translocation, and thus conserves the redox energy in a proton gradient. Cyanobacterial NDH-1 also plays a role in inorganic carbon-concentration. The chain is NAD(P)H-quinone oxidoreductase subunit J from Prochlorococcus marinus (strain NATL2A).